Reading from the N-terminus, the 461-residue chain is Fumarate hydratase class II (461 aa).

Substrate-binding positions include 97–99, 127–130, 137–139, and threonine 185; these read SGT, HPND, and SSN. The active-site Proton donor/acceptor is the histidine 186. Serine 316 is an active-site residue. Residues serine 317 and 322–324 contribute to the substrate site; that span reads KVN.

It belongs to the class-II fumarase/aspartase family. Fumarase subfamily. As to quaternary structure, homotetramer.

It is found in the cytoplasm. The enzyme catalyses (S)-malate = fumarate + H2O. The protein operates within carbohydrate metabolism; tricarboxylic acid cycle; (S)-malate from fumarate: step 1/1. Involved in the TCA cycle. Catalyzes the stereospecific interconversion of fumarate to L-malate. This Staphylococcus epidermidis (strain ATCC 35984 / DSM 28319 / BCRC 17069 / CCUG 31568 / BM 3577 / RP62A) protein is Fumarate hydratase class II.